The sequence spans 1258 residues: Cohesin subunit SA-1 (1258 aa).

Residues 1–59 form a disordered region; that stretch reads MITSELPVLQDSTNETTAHSDAGSELEETEVKGKRKRGRPGRPPSTNKKPRKSPGEKSR. Residues 10 to 19 show a composition bias toward polar residues; that stretch reads QDSTNETTAH. Phosphoserine is present on S24. One can recognise an SCD domain in the interval 296 to 381; it reads FVHRYRDAIA…NRFKDRIVSM (86 aa). A phosphoserine mark is found at S756, S1062, and S1065. A disordered region spans residues 1055–1148; that stretch reads GGEDDRMSVN…EHGSEPDFLH (94 aa). Residues 1062-1075 show a composition bias toward low complexity; sequence SVNSGSSSSKTSSV. Residues 1076-1087 are compositionally biased toward basic residues; sequence RSKKGRPPLHRK. S1093 carries the post-translational modification Phosphoserine. Polar residues predominate over residues 1095-1106; it reads DNTWLNRTDTMI. Residues 1137–1146 show a composition bias toward basic and acidic residues; that stretch reads ESEHGSEPDF. K1161 is covalently cross-linked (Glycyl lysine isopeptide (Lys-Gly) (interchain with G-Cter in SUMO2)).

The protein belongs to the SCC3 family. Cohesin complexes are composed of a heterodimer between a SMC1 protein (SMC1A or SMC1B) and SMC3, which are attached via their hinge domain, and RAD21 which link them at their heads, and one STAG protein (STAG1, STAG2 or STAG3). In cohesin complexes, STAG1 is mutually exclusive with STAG2 and STAG3. Interacts directly with RAD21 in cohesin complex. The cohesin complex interacts with the cohesin loading complex subunits NIPBL/Scc2 (via HEAT repeats) and MAU2/Scc4. NIPBL directly contacts all members of the complex, RAD21, SMC1A/B, SMC3 and STAG1. Post-translationally, phosphorylated by PLK1. The large dissociation of cohesin from chromosome arms during prophase is partly due to its phosphorylation.

The protein resides in the nucleus. Its subcellular location is the chromosome. In terms of biological role, component of cohesin complex, a complex required for the cohesion of sister chromatids after DNA replication. The cohesin complex apparently forms a large proteinaceous ring within which sister chromatids can be trapped. At anaphase, the complex is cleaved and dissociates from chromatin, allowing sister chromatids to segregate. The cohesin complex may also play a role in spindle pole assembly during mitosis. This Mus musculus (Mouse) protein is Cohesin subunit SA-1 (Stag1).